A 161-amino-acid polypeptide reads, in one-letter code: Transcription antitermination protein NusB (161 aa).

It belongs to the NusB family.

Functionally, involved in transcription antitermination. Required for transcription of ribosomal RNA (rRNA) genes. Binds specifically to the boxA antiterminator sequence of the ribosomal RNA (rrn) operons. In Nitrobacter winogradskyi (strain ATCC 25391 / DSM 10237 / CIP 104748 / NCIMB 11846 / Nb-255), this protein is Transcription antitermination protein NusB.